An 876-amino-acid chain; its full sequence is MEMINIQDLANEVDMSVDRLVQVCIKIGILKTKYDTITQLEKLTILNYLNENLKNSNKNVLMLKRKIRSTVKIFSSGGKNKCISIEIRKNKRYSKSNDDIKTFLEKNKDINLNKSEIVLSAKEDSKIFVSHSKDNINSNINDTCTIRKKFNKNFKKQQKINILSEKEDKNNLDNVLNVEQGSKKKINFKNVVLEEKKENKVKFSNYIKLSEKYNTRKVSNFLTSKNIRDHNNVEKHRRNRNKILRNKHQKDNFSFEKNLSDKNIKLDNCIHKKSIKNKKESLLKQVFKKPLRAINRNIILSSAISIFNLANKMAVKSSEIIKMMARLGYTVTINQIIDQDIAQLVAEEMGHKVTICYENKLEDKIMRDRDFGDGIKKTRPPIITIMGHVDHGKTSLLDKIRLTRVADSEPGRITQHIGAYHIKINNKIITFLDTPGHSAFTAMRARGAQVTDIVILVIAIDDGIKPQTIEAIQHAQAASVPIIIAINKIDKLITNIEKIKNELTKYNILPEEWGGDNIFVNISAKSGEGIESLLNAILTQSEMLELKSISNGMASGLVIESYLDKGRGPTAIILIKEGKLNKGDIVLCGFEYGKVRSIRDDLENEVNSIGPSIPVKILGLSGIPLAGDKIVVVRDEKQAREVATYRQKKFKEQKMSKQRQLKSLDIFEDVKRSSNPSLNIVIKSDVQGSLEAISYSLLKLSNDEIKINIIGKGVGGITETDVLLAAASNAIIIGFNVRADSSAKRIIEFENVDFRYYSVIYQIIDEIKNCICGMLSPKYQQKIIGLANVRSIFKSPKIGVIAGCIVMEGIIKRNSIIQILRNNVVIHKGELISLRRFKEDVSEVRCGVECGIGMKNFNDICIEDIIEVFETIEIKQ.

In terms of domain architecture, tr-type G spans 378–547 (TRPPIITIMG…LTQSEMLELK (170 aa)). The segment at 387–394 (GHVDHGKT) is G1. 387–394 (GHVDHGKT) lines the GTP pocket. The interval 412–416 (RITQH) is G2. The interval 433–436 (DTPG) is G3. GTP-binding positions include 433–437 (DTPGH) and 487–490 (NKID). A G4 region spans residues 487–490 (NKID). Residues 523–525 (SAK) are G5.

This sequence belongs to the TRAFAC class translation factor GTPase superfamily. Classic translation factor GTPase family. IF-2 subfamily.

It localises to the cytoplasm. Its function is as follows. One of the essential components for the initiation of protein synthesis. Protects formylmethionyl-tRNA from spontaneous hydrolysis and promotes its binding to the 30S ribosomal subunits. Also involved in the hydrolysis of GTP during the formation of the 70S ribosomal complex. This is Translation initiation factor IF-2 from Buchnera aphidicola subsp. Baizongia pistaciae (strain Bp).